The sequence spans 156 residues: Regulatory protein RecX (156 aa).

The protein belongs to the RecX family.

The protein resides in the cytoplasm. Functionally, modulates RecA activity. In Pseudomonas putida (strain GB-1), this protein is Regulatory protein RecX.